Consider the following 477-residue polypeptide: Glutamate--tRNA ligase (477 aa).

The short motif at 18-28 (PSPTGFIHLGN) is the 'HIGH' region element. Basic and acidic residues predominate over residues 128–138 (PRYDGSWRPEP). Residues 128-151 (PRYDGSWRPEPGKTLPPVPAGMSP) are disordered. Residues 250-254 (KLSKR) carry the 'KMSKS' region motif. Residue K253 participates in ATP binding.

It belongs to the class-I aminoacyl-tRNA synthetase family. Glutamate--tRNA ligase type 1 subfamily. Monomer.

It is found in the cytoplasm. It catalyses the reaction tRNA(Glu) + L-glutamate + ATP = L-glutamyl-tRNA(Glu) + AMP + diphosphate. In terms of biological role, catalyzes the attachment of glutamate to tRNA(Glu) in a two-step reaction: glutamate is first activated by ATP to form Glu-AMP and then transferred to the acceptor end of tRNA(Glu). The chain is Glutamate--tRNA ligase from Verminephrobacter eiseniae (strain EF01-2).